Here is a 670-residue protein sequence, read N- to C-terminus: Lebercilin-like protein (670 aa).

Positions 24–44 (RRSAECKRSPGTGDFSRNSNA) are disordered. Coiled coils occupy residues 148-259 (LHKI…EREE) and 305-336 (AAQT…IKNI). Residues 351-402 (YPKVSSTKSVQADRKSLPFTSMRHQGTQKSDVAPLTTKGKKATGNMDRKEKS) form a disordered region. Polar residues predominate over residues 368-380 (PFTSMRHQGTQKS). Positions 420–440 (EDSKTKYEDLSREEKHLEVQV) form a coiled coil. Disordered stretches follow at residues 495 to 520 (RSMQ…PLRQ), 533 to 594 (LHHG…FRDK), and 606 to 647 (GYVL…AFGD). Over residues 546–558 (AGNTKYSHSTSKH) the composition is skewed to polar residues. Basic and acidic residues-rich tracts occupy residues 560–572 (SNRE…HSDS), 585–594 (KAKDTTFRDK), and 621–632 (GSEEPLQSKESH). The span at 637–647 (SQASASNAFGD) shows a compositional bias: polar residues.

This sequence belongs to the LCA5 family.

This is Lebercilin-like protein from Papio anubis (Olive baboon).